Here is a 933-residue protein sequence, read N- to C-terminus: MKHIFKKLHRGGNQEQQNRTNDAAPPSDQNRIHVSANPPQATPSSVTETLPVAGATSSMASPAPTAASNRADYMSSEEEYQVQLALAISASNSQSSEDPEKHQIRAATLLSLGSHQRMDSRRDSSEVVAQRLSRQYWEYGVLDYEEKVVDSFYDVYSLSTDSAKQGEMPSLEDLESNHGTPGFEAVVVNRPIDSSLHELLEIAECIALGCSTTSVSVLVQRLAELVTEHMGGSAEDSSIVLARWTEKSSEFKAALNTCVFPIGFVKIGISRHRALLFKVLADSVRLPCRLVKGSHYTGNEDDAVNTIRLEDEREYLVDLMTDPGTLIPADFASASNNTVEPCNSNGNKFPTAQFSNDVPKLSEGEGSSHSSMANYSSSLDRRTEAERTDSSYPKVGPLRNIDYSSPSSVTSSTQLENNSSTAIGKGSRGAIIECSRTNMNIVPYNQNSEEDPKNLFADLNPFQNKGADKLYMPTKSGLNNVDDFHQQKNNPLVGRSPAPMMWKNYSCNEAPKRKENSYIENLLPKLHRDPRYGNTQSSYATSSSNGAISSNVHGRDNVTFVSPVAVPSSFTSTENQFRPSIVEDMNRNTNNELDLQPHTAAVVHGQQNDESHIHDHRKYTSDDISTGCDPRLKDHESTSSSLDSTSYRNDPQVLDDADVGECEIPWNDLVIAERIGLGSYGEVYHADWHGTEVAVKKFLDQDFSGAALAEFRSEVRIMRRLRHPNVVFFLGAVTRPPNLSIVTEFLPRGSLYRILHRPKSHIDERRRIKMALDVAMGMNCLHTSTPTIVHRDLKTPNLLVDNNWNVKVGDFGLSRLKHNTFLSSKSTAGTPEWMAPEVLRNEPSNEKCDVYSFGVILWELATLRLPWRGMNPMQVVGAVGFQNRRLEIPKELDPVVGRIILECWQTDPNLRPSFAQLTEVLKPLNRLVLPTPQ.

Over residues 1–10 the composition is skewed to basic residues; that stretch reads MKHIFKKLHR. 4 disordered regions span residues 1 to 74, 342 to 424, 527 to 550, and 604 to 650; these read MKHI…ADYM, CNSN…TAIG, HRDP…AISS, and HGQQ…YRND. Polar residues predominate over residues 37–48; the sequence is NPPQATPSSVTE. A compositionally biased stretch (low complexity) spans 53 to 68; sequence AGATSSMASPAPTAAS. The span at 342 to 356 shows a compositional bias: polar residues; that stretch reads CNSNGNKFPTAQFSN. Over residues 367-378 the composition is skewed to low complexity; the sequence is SSHSSMANYSSS. Residues 379–389 are compositionally biased toward basic and acidic residues; that stretch reads LDRRTEAERTD. Residues 404-413 show a composition bias toward low complexity; the sequence is SSPSSVTSST. A compositionally biased stretch (polar residues) spans 533-550; the sequence is GNTQSSYATSSSNGAISS. Positions 607-621 are enriched in basic and acidic residues; that stretch reads QNDESHIHDHRKYTS. The 257-residue stretch at 669-925 folds into the Protein kinase domain; the sequence is LVIAERIGLG…QLTEVLKPLN (257 aa). Residues 675–683 and Lys696 each bind ATP; that span reads IGLGSYGEV. Residue Asp792 is the Proton acceptor of the active site.

This sequence belongs to the protein kinase superfamily. TKL Ser/Thr protein kinase family. RAF subfamily. In terms of assembly, interacts with KEG. Binds and recruited by EDR4 at the powdery mildew (e.g. G.cichoracearum) penetration site on the plasma membrane. Post-translationally, autophosphorylated.

It is found in the cell membrane. The protein resides in the endosome. Its subcellular location is the nucleus. The protein localises to the endoplasmic reticulum. It localises to the golgi apparatus. It is found in the trans-Golgi network. The protein resides in the early endosome. The catalysed reaction is L-seryl-[protein] + ATP = O-phospho-L-seryl-[protein] + ADP + H(+). The enzyme catalyses L-threonyl-[protein] + ATP = O-phospho-L-threonyl-[protein] + ADP + H(+). MAPKKK serine/threonine-protein kinase involved in the regulation of a MAP kinase cascade (probably including MPK3 and MPK6) that negatively regulates salicylic acid- (SA-) dependent defense responses, abscisic acid (ABA) signaling, and ethylene-induced senescence. Also modulates stress response (e.g. drought) signaling and cell death, in an ORE9-dependent manner. Functions at a point of cross talk between ethylene, ABA and SA signaling that impinges on senescence and cell death. On the other hand, it confers sensitivity to various pathogens such as the fungus E.cichoracearum, the oomycete H.parasitica and the bacteria P.syringae pv. tomato DC3000. Required for resistance to some hemibiotrophic/necrotrophic fungal pathogens (e.g. C.gloeosporioides, C.higginsianum and A.brassicicola) through the induction of defensin expression, probably by repressing MYC2, an inhibitor of defensin genes (PDFs). Together with KEG, may regulate endocytic trafficking and/or the formation of signaling complexes on trans-Golgi network (TGN)/ early endosome (EE) vesicles during stress responses. The protein is Serine/threonine-protein kinase EDR1 (EDR1) of Arabidopsis thaliana (Mouse-ear cress).